Here is a 338-residue protein sequence, read N- to C-terminus: Putative pectinesterase 63 (338 aa).

A signal peptide spans 1–24; it reads MGYNYVSLIVTILLVVITSPVVFG. The substrate site is built by Thr-116 and Gln-151. Catalysis depends on Asp-174, which acts as the Proton donor. Catalysis depends on Asp-195, which acts as the Nucleophile. Arg-252 serves as a coordination point for substrate.

It belongs to the pectinesterase family.

Its subcellular location is the secreted. It localises to the cell wall. The enzyme catalyses [(1-&gt;4)-alpha-D-galacturonosyl methyl ester](n) + n H2O = [(1-&gt;4)-alpha-D-galacturonosyl](n) + n methanol + n H(+). The protein operates within glycan metabolism; pectin degradation; 2-dehydro-3-deoxy-D-gluconate from pectin: step 1/5. Its function is as follows. Acts in the modification of cell walls via demethylesterification of cell wall pectin. In Arabidopsis thaliana (Mouse-ear cress), this protein is Putative pectinesterase 63 (PME63).